Here is a 426-residue protein sequence, read N- to C-terminus: Dihydroorotase (426 aa).

Residues H62 and H64 each contribute to the Zn(2+) site. Substrate is bound by residues H64–R66 and N96. Positions 154, 181, and 234 each coordinate Zn(2+). N280 provides a ligand contact to substrate. Residue D307 participates in Zn(2+) binding. D307 is a catalytic residue. Substrate contacts are provided by residues H311 and F325 to G326.

It belongs to the metallo-dependent hydrolases superfamily. DHOase family. Class I DHOase subfamily. Requires Zn(2+) as cofactor.

The enzyme catalyses (S)-dihydroorotate + H2O = N-carbamoyl-L-aspartate + H(+). It functions in the pathway pyrimidine metabolism; UMP biosynthesis via de novo pathway; (S)-dihydroorotate from bicarbonate: step 3/3. In terms of biological role, catalyzes the reversible cyclization of carbamoyl aspartate to dihydroorotate. In Desulforapulum autotrophicum (strain ATCC 43914 / DSM 3382 / VKM B-1955 / HRM2) (Desulfobacterium autotrophicum), this protein is Dihydroorotase.